The chain runs to 72 residues: Translation initiation factor IF-1 (72 aa).

The S1-like domain occupies 1-72; sequence MSKEDLIEFT…SKGRITFRFK (72 aa).

Belongs to the IF-1 family. As to quaternary structure, component of the 30S ribosomal translation pre-initiation complex which assembles on the 30S ribosome in the order IF-2 and IF-3, IF-1 and N-formylmethionyl-tRNA(fMet); mRNA recruitment can occur at any time during PIC assembly.

Its subcellular location is the cytoplasm. One of the essential components for the initiation of protein synthesis. Stabilizes the binding of IF-2 and IF-3 on the 30S subunit to which N-formylmethionyl-tRNA(fMet) subsequently binds. Helps modulate mRNA selection, yielding the 30S pre-initiation complex (PIC). Upon addition of the 50S ribosomal subunit IF-1, IF-2 and IF-3 are released leaving the mature 70S translation initiation complex. This is Translation initiation factor IF-1 from Gluconobacter oxydans (strain 621H) (Gluconobacter suboxydans).